Here is a 226-residue protein sequence, read N- to C-terminus: Protein-L-isoaspartate O-methyltransferase (226 aa).

The active site involves serine 66.

The protein belongs to the methyltransferase superfamily. L-isoaspartyl/D-aspartyl protein methyltransferase family.

It localises to the cytoplasm. It carries out the reaction [protein]-L-isoaspartate + S-adenosyl-L-methionine = [protein]-L-isoaspartate alpha-methyl ester + S-adenosyl-L-homocysteine. In terms of biological role, catalyzes the methyl esterification of L-isoaspartyl residues in peptides and proteins that result from spontaneous decomposition of normal L-aspartyl and L-asparaginyl residues. It plays a role in the repair and/or degradation of damaged proteins. The chain is Protein-L-isoaspartate O-methyltransferase from Methanopyrus kandleri (strain AV19 / DSM 6324 / JCM 9639 / NBRC 100938).